Here is a 433-residue protein sequence, read N- to C-terminus: Type I acyl-CoA thioesterase mpaH (433 aa).

The segment at 58–246 (HGVGLPKELY…IKARFGTTAD (189 aa)) is abhydrolase domain. V60 contacts substrate. Catalysis depends on S139, which acts as the Nucleophile. F140 provides a ligand contact to substrate. Residues D163 and H365 contribute to the active site.

Belongs to the AB hydrolase superfamily. MpaH hydrolase family. In terms of assembly, homodimer.

The protein localises to the peroxisome matrix. It catalyses the reaction mycophenolyl-CoA + H2O = mycophenolate + CoA + H(+). Its pathway is secondary metabolite biosynthesis; terpenoid biosynthesis. Its function is as follows. Type I acyl-CoA thioesterase; part of the gene cluster that mediates the biosynthesis of mycophenolic acid (MPA), the first isolated antibiotic natural product in the world obtained from a culture of Penicillium brevicompactum in 1893. MpaH acts as a peroxisomal acyl-CoA hydrolase that converts MPA-CoA into the final product MPA. The first step of the pathway is the synthesis of 5-methylorsellinic acid (5MOA) by the cytosolic polyketide synthase mpaC. 5MOA is then converted to the phthalide compound 5,7-dihydroxy-4,6-dimethylphthalide (DHMP) by the endoplasmic reticulum-bound cytochrome P450 monooxygenase mpaDE. MpaDE first catalyzes hydroxylation of 5-MOA to 4,6-dihydroxy-2-(hydroxymethyl)-3-methylbenzoic acid (DHMB). MpaDE then acts as a lactone synthase that catalyzes the ring closure to convert DHMB into DHMP. The next step is the prenylation of DHMP by the Golgi apparatus-associated prenyltransferase mpaA to yield farnesyl-DHMP (FDHMP). The ER-bound oxygenase mpaB then mediates the oxidative cleavage the C19-C20 double bond in FDHMP to yield FDHMP-3C via a mycophenolic aldehyde intermediate. The O-methyltransferase mpaG catalyzes the methylation of FDHMP-3C to yield MFDHMP-3C. After the cytosolic methylation of FDHMP-3C, MFDHMP-3C enters into peroxisomes probably via free diffusion due to its low molecular weight. Upon a peroxisomal CoA ligation reaction, catalyzed by a beta-oxidation component enzyme acyl-CoA ligase ACL891, MFDHMP-3C-CoA would then be restricted to peroxisomes for the following beta-oxidation pathway steps. The peroxisomal beta-oxidation machinery than converts MFDHMP-3C-CoA into MPA_CoA, via a beta-oxidation chain-shortening process. Finally mpaH acts as a peroxisomal acyl-CoA hydrolase with high substrate specificity toward MPA-CoA to release the final product MPA. The polypeptide is Type I acyl-CoA thioesterase mpaH (Penicillium brevicompactum).